The primary structure comprises 312 residues: Ribosomal protein L11 methyltransferase (312 aa).

S-adenosyl-L-methionine is bound by residues Thr160, Gly181, Asp203, and Asn246.

This sequence belongs to the methyltransferase superfamily. PrmA family.

Its subcellular location is the cytoplasm. It catalyses the reaction L-lysyl-[protein] + 3 S-adenosyl-L-methionine = N(6),N(6),N(6)-trimethyl-L-lysyl-[protein] + 3 S-adenosyl-L-homocysteine + 3 H(+). In terms of biological role, methylates ribosomal protein L11. This chain is Ribosomal protein L11 methyltransferase, found in Staphylococcus aureus (strain USA300).